The sequence spans 486 residues: Glycogen synthase (486 aa).

Position 15 (lysine 15) interacts with ADP-alpha-D-glucose.

The protein belongs to the glycosyltransferase 1 family. Bacterial/plant glycogen synthase subfamily.

It catalyses the reaction [(1-&gt;4)-alpha-D-glucosyl](n) + ADP-alpha-D-glucose = [(1-&gt;4)-alpha-D-glucosyl](n+1) + ADP + H(+). Its pathway is glycan biosynthesis; glycogen biosynthesis. Synthesizes alpha-1,4-glucan chains using ADP-glucose. This chain is Glycogen synthase, found in Thermotoga maritima (strain ATCC 43589 / DSM 3109 / JCM 10099 / NBRC 100826 / MSB8).